The following is a 257-amino-acid chain: MPKRTGDILISTPVSKVRRRLNFDSPYTSRAAAPTVQGIKRRSWTYRPMYRKPRMYRMYRSPDVPPGCEGPCKVQSYEQRDDVKHTGVVRCVSDVTRGSGITHRVGKRFCIKSIYILGKIWMDENIKKQNHTNQVMFFLVRDRRPYGTSPMDFGQVFNMFDNEPSTATVKNDLRDRYQVMRKFHATVVGGPSGMKEQCLLKRFFKINTHVVYNHQEQAKYENHTENALLLYMACTHASNPVYATLKIRIYFYDAVTN.

Belongs to the geminiviridae capsid protein family.

It localises to the virion. In terms of biological role, encapsidates the viral DNA into characteristic twinned ('geminate') particles. Plays a role in protection of the genome from degradation, virus acquisition and transmission by insect vectors, infectivity, and systemic movement. In Capsicum annuum (Capsicum pepper), this protein is Capsid protein.